A 155-amino-acid polypeptide reads, in one-letter code: Ribosome maturation factor RimP (155 aa).

This sequence belongs to the RimP family.

It localises to the cytoplasm. In terms of biological role, required for maturation of 30S ribosomal subunits. The polypeptide is Ribosome maturation factor RimP (Prochlorococcus marinus (strain AS9601)).